The primary structure comprises 271 residues: Phosphate import ATP-binding protein PstB 2 (271 aa).

The ABC transporter domain occupies 25 to 266 (MATEDLHVYY…PQEKQTEDYI (242 aa)). Residue 57-64 (GPSGCGKS) participates in ATP binding.

The protein belongs to the ABC transporter superfamily. Phosphate importer (TC 3.A.1.7) family. As to quaternary structure, the complex is composed of two ATP-binding proteins (PstB), two transmembrane proteins (PstC and PstA) and a solute-binding protein (PstS).

It is found in the cell membrane. It catalyses the reaction phosphate(out) + ATP + H2O = ADP + 2 phosphate(in) + H(+). In terms of biological role, part of the ABC transporter complex PstSACB involved in phosphate import. Responsible for energy coupling to the transport system. This Listeria monocytogenes serovar 1/2a (strain ATCC BAA-679 / EGD-e) protein is Phosphate import ATP-binding protein PstB 2.